Consider the following 213-residue polypeptide: Outer-membrane lipoprotein LolB (213 aa).

A signal peptide spans 1–24 (MNNLSYFTKTKLVWVILSLSLLSA). Cys25 carries N-palmitoyl cysteine lipidation. Cys25 carries the S-diacylglycerol cysteine lipid modification.

Belongs to the LolB family. Monomer.

Its subcellular location is the cell outer membrane. Its function is as follows. Plays a critical role in the incorporation of lipoproteins in the outer membrane after they are released by the LolA protein. This Shewanella woodyi (strain ATCC 51908 / MS32) protein is Outer-membrane lipoprotein LolB.